The chain runs to 248 residues: 2,3-bisphosphoglycerate-dependent phosphoglycerate mutase (248 aa).

Residues 8 to 15 (RHGESLWN), 21 to 22 (TG), Arg-60, 87 to 90 (EKHY), Lys-98, 114 to 115 (RR), and 183 to 184 (GN) contribute to the substrate site. His-9 acts as the Tele-phosphohistidine intermediate in catalysis. Glu-87 acts as the Proton donor/acceptor in catalysis.

The protein belongs to the phosphoglycerate mutase family. BPG-dependent PGAM subfamily.

It catalyses the reaction (2R)-2-phosphoglycerate = (2R)-3-phosphoglycerate. It functions in the pathway carbohydrate degradation; glycolysis; pyruvate from D-glyceraldehyde 3-phosphate: step 3/5. In terms of biological role, catalyzes the interconversion of 2-phosphoglycerate and 3-phosphoglycerate. The sequence is that of 2,3-bisphosphoglycerate-dependent phosphoglycerate mutase from Porphyromonas gingivalis (strain ATCC 33277 / DSM 20709 / CIP 103683 / JCM 12257 / NCTC 11834 / 2561).